The following is a 188-amino-acid chain: Adenine phosphoribosyltransferase (188 aa).

Belongs to the purine/pyrimidine phosphoribosyltransferase family. In terms of assembly, homodimer.

Its subcellular location is the cytoplasm. The enzyme catalyses AMP + diphosphate = 5-phospho-alpha-D-ribose 1-diphosphate + adenine. It functions in the pathway purine metabolism; AMP biosynthesis via salvage pathway; AMP from adenine: step 1/1. Its function is as follows. Catalyzes a salvage reaction resulting in the formation of AMP, that is energically less costly than de novo synthesis. The chain is Adenine phosphoribosyltransferase from Burkholderia orbicola (strain MC0-3).